Here is a 233-residue protein sequence, read N- to C-terminus: Octanoyltransferase (233 aa).

The region spanning 38–218 (AGGPDTLLLL…AVCDALDGVL (181 aa)) is the BPL/LPL catalytic domain. Residues 57-66 (RRTEPHERPL) are compositionally biased toward basic and acidic residues. The tract at residues 57–77 (RRTEPHERPLDGTPVVDTDRG) is disordered. Residues 76-83 (RGGKITWH), 148-150 (AIG), and 161-163 (GFA) contribute to the substrate site. The active-site Acyl-thioester intermediate is the Cys179.

Belongs to the LipB family.

The protein resides in the cytoplasm. The catalysed reaction is octanoyl-[ACP] + L-lysyl-[protein] = N(6)-octanoyl-L-lysyl-[protein] + holo-[ACP] + H(+). The protein operates within protein modification; protein lipoylation via endogenous pathway; protein N(6)-(lipoyl)lysine from octanoyl-[acyl-carrier-protein]: step 1/2. Functionally, catalyzes the transfer of endogenously produced octanoic acid from octanoyl-acyl-carrier-protein onto the lipoyl domains of lipoate-dependent enzymes. Lipoyl-ACP can also act as a substrate although octanoyl-ACP is likely to be the physiological substrate. The sequence is that of Octanoyltransferase from Mycolicibacterium paratuberculosis (strain ATCC BAA-968 / K-10) (Mycobacterium paratuberculosis).